Here is a 639-residue protein sequence, read N- to C-terminus: Cystathionine gamma-synthase (639 aa).

Lys443 is modified (N6-(pyridoxal phosphate)lysine).

It belongs to the trans-sulfuration enzymes family. MET7 subfamily. The cofactor is pyridoxal 5'-phosphate.

Its subcellular location is the cytoplasm. The protein resides in the nucleus. It carries out the reaction O-succinyl-L-homoserine + L-cysteine = L,L-cystathionine + succinate + H(+). Its pathway is amino-acid biosynthesis; L-methionine biosynthesis via de novo pathway; L-cystathionine from O-succinyl-L-homoserine: step 1/1. Functionally, catalyzes the formation of L-cystathionine from O-succinyl-L-homoserine (OSHS) and L-cysteine, via a gamma-replacement reaction. In the absence of thiol, catalyzes gamma-elimination to form 2-oxobutanoate, succinate and ammonia. This Saccharomyces cerevisiae (strain ATCC 204508 / S288c) (Baker's yeast) protein is Cystathionine gamma-synthase.